The sequence spans 102 residues: PE family immunomodulator PE5 (102 aa).

Positions 3–92 constitute a PE domain; it reads LRVVPEGLAA…GASYLAGDAA (90 aa).

It belongs to the mycobacterial PE family.

The protein resides in the secreted. It localises to the cell envelope. It is found in the cell surface. Its function is as follows. Important for the siderophore-mediated iron-acquisition function of ESX-3. May play a pivotal role in the evasion of host immune response by M.tuberculosis. Mediates production of IL-10 via activation of the p38 and ERK1/2 mitogen-activated protein kinase (MAPK) signaling pathways. This Mycobacterium tuberculosis (strain ATCC 25618 / H37Rv) protein is PE family immunomodulator PE5.